A 71-amino-acid chain; its full sequence is Small ribosomal subunit protein bS21 (71 aa).

Belongs to the bacterial ribosomal protein bS21 family.

This is Small ribosomal subunit protein bS21 from Psychromonas ingrahamii (strain DSM 17664 / CCUG 51855 / 37).